Reading from the N-terminus, the 215-residue chain is Urease accessory protein UreG (215 aa).

Residue 24–31 coordinates GTP; it reads GPVGSGKT.

The protein belongs to the SIMIBI class G3E GTPase family. UreG subfamily. Homodimer. UreD, UreF and UreG form a complex that acts as a GTP-hydrolysis-dependent molecular chaperone, activating the urease apoprotein by helping to assemble the nickel containing metallocenter of UreC. The UreE protein probably delivers the nickel.

It localises to the cytoplasm. Facilitates the functional incorporation of the urease nickel metallocenter. This process requires GTP hydrolysis, probably effectuated by UreG. This Burkholderia ambifaria (strain ATCC BAA-244 / DSM 16087 / CCUG 44356 / LMG 19182 / AMMD) (Burkholderia cepacia (strain AMMD)) protein is Urease accessory protein UreG.